A 391-amino-acid chain; its full sequence is Carbamoyl phosphate synthase small chain (391 aa).

The CPSase stretch occupies residues 1–187 (MAGVKERAVL…PLPYAWPTLK (187 aa)). Residues S50, G239, and G241 each coordinate L-glutamine. The region spanning 191 to 376 (RIVVMDFGIK…LEEVEAFHGA (186 aa)) is the Glutamine amidotransferase type-1 domain. C266 serves as the catalytic Nucleophile. Positions 267, 270, 308, 310, and 311 each coordinate L-glutamine. Active-site residues include H349 and E351.

It belongs to the CarA family. Composed of two chains; the small (or glutamine) chain promotes the hydrolysis of glutamine to ammonia, which is used by the large (or ammonia) chain to synthesize carbamoyl phosphate. Tetramer of heterodimers (alpha,beta)4.

The catalysed reaction is hydrogencarbonate + L-glutamine + 2 ATP + H2O = carbamoyl phosphate + L-glutamate + 2 ADP + phosphate + 2 H(+). It catalyses the reaction L-glutamine + H2O = L-glutamate + NH4(+). It participates in amino-acid biosynthesis; L-arginine biosynthesis; carbamoyl phosphate from bicarbonate: step 1/1. It functions in the pathway pyrimidine metabolism; UMP biosynthesis via de novo pathway; (S)-dihydroorotate from bicarbonate: step 1/3. Its function is as follows. Small subunit of the glutamine-dependent carbamoyl phosphate synthetase (CPSase). CPSase catalyzes the formation of carbamoyl phosphate from the ammonia moiety of glutamine, carbonate, and phosphate donated by ATP, constituting the first step of 2 biosynthetic pathways, one leading to arginine and/or urea and the other to pyrimidine nucleotides. The small subunit (glutamine amidotransferase) binds and cleaves glutamine to supply the large subunit with the substrate ammonia. The polypeptide is Carbamoyl phosphate synthase small chain (Thermus thermophilus (strain ATCC BAA-163 / DSM 7039 / HB27)).